Reading from the N-terminus, the 322-residue chain is Mas-related G-protein coupled receptor member X4 (322 aa).

At 1-31 (MDPTVPVFGTKLTPINGREETPCYNQTLSFT) the chain is on the extracellular side. Asn-25 carries an N-linked (GlcNAc...) asparagine glycan. The chain crosses the membrane as a helical span at residues 32-52 (VLTCIISLVGLTGNAVVLWLL). The Cytoplasmic portion of the chain corresponds to 53 to 60 (GYRMRRNA). Residues 61–81 (VSIYILNLAAADFLFLSFQII) form a helical membrane-spanning segment. The Extracellular segment spans residues 82 to 96 (RLPLRLINISHLIRK). Residue Asn-89 is glycosylated (N-linked (GlcNAc...) asparagine). The chain crosses the membrane as a helical span at residues 97–117 (ILVSVMTFPYFTGLSMLSAIS). Topologically, residues 118–137 (TERCLSVLWPIWYRCRRPTH) are cytoplasmic. Residues 138–158 (LSAVVCVLLWGLSLLFSMLEW) traverse the membrane as a helical segment. The Extracellular portion of the chain corresponds to 159–177 (RFCDFLFSGADSSWCETSD). A helical transmembrane segment spans residues 178-198 (FIPVAWLIFLCVVLCVSSLVL). Topologically, residues 199-218 (LVRILCGSRKMPLTRLYVTI) are cytoplasmic. Residues 219–239 (LLTVLVFLLCGLPFGILGALI) traverse the membrane as a helical segment. Topologically, residues 240-254 (YRMHLNLEVLYCHVY) are extracellular. The chain crosses the membrane as a helical span at residues 255–275 (LVCMSLSSLNSSANPIIYFFV). Residues 276-322 (GSFRQRQNRQNLKLVLQRALQDKPEVDKGEGQLPEESLELSGSRLGP) are Cytoplasmic-facing. A disordered region spans residues 299–322 (PEVDKGEGQLPEESLELSGSRLGP).

Belongs to the G-protein coupled receptor 1 family. Mas subfamily. In terms of tissue distribution, uniquely localized in a subset of small dorsal root and trigeminal sensory neurons.

Its subcellular location is the cell membrane. Functionally, orphan receptor. Probably involved in the function of nociceptive neurons. May regulate nociceptor function and/or development, including the sensation or modulation of pain. Potently activated by enkephalins. The protein is Mas-related G-protein coupled receptor member X4 (MRGPRX4) of Homo sapiens (Human).